A 292-amino-acid polypeptide reads, in one-letter code: Probable ABC transporter phosphonate/phosphite binding protein PhnD2 (292 aa).

A signal peptide spans 1-20 (MKLKSLLSVFTISIVALTSA). C21 carries the N-palmitoyl cysteine lipid modification. C21 carries S-diacylglycerol cysteine lipidation.

Belongs to the phosphate/phosphite/phosphonate binding protein family. As to quaternary structure, the complex may be composed of two ATP-binding proteins (PhnC2), two transmembrane proteins (PhnE2) and a solute-binding protein (PhnD2).

It localises to the cell membrane. In terms of biological role, probably part of the ABC transporter complex PhnC2D2E2. Binds strongly to methylphosphonate (MPn), ethylphosphonate (EPn) and inorganic phosphite. This is Probable ABC transporter phosphonate/phosphite binding protein PhnD2 from Prochlorococcus marinus (strain MIT 9301).